We begin with the raw amino-acid sequence, 103 residues long: Large ribosomal subunit protein bL21 (103 aa).

Belongs to the bacterial ribosomal protein bL21 family. Part of the 50S ribosomal subunit. Contacts protein L20.

In terms of biological role, this protein binds to 23S rRNA in the presence of protein L20. The chain is Large ribosomal subunit protein bL21 from Caldicellulosiruptor saccharolyticus (strain ATCC 43494 / DSM 8903 / Tp8T 6331).